Consider the following 394-residue polypeptide: Formate-dependent phosphoribosylglycinamide formyltransferase (394 aa).

N(1)-(5-phospho-beta-D-ribosyl)glycinamide-binding positions include 22-23 (EL) and Glu82. Residues Arg114, Lys155, 160 to 165 (SSGKGQ), 195 to 198 (EGFV), and Glu203 contribute to the ATP site. Residues 119–308 (RLAAETLKLP…EFALHVRAIL (190 aa)) enclose the ATP-grasp domain. Mg(2+)-binding residues include Glu267 and Glu279. N(1)-(5-phospho-beta-D-ribosyl)glycinamide contacts are provided by residues Asp286, Lys357, and 364–365 (RR).

The protein belongs to the PurK/PurT family. In terms of assembly, homodimer.

It carries out the reaction N(1)-(5-phospho-beta-D-ribosyl)glycinamide + formate + ATP = N(2)-formyl-N(1)-(5-phospho-beta-D-ribosyl)glycinamide + ADP + phosphate + H(+). It functions in the pathway purine metabolism; IMP biosynthesis via de novo pathway; N(2)-formyl-N(1)-(5-phospho-D-ribosyl)glycinamide from N(1)-(5-phospho-D-ribosyl)glycinamide (formate route): step 1/1. Involved in the de novo purine biosynthesis. Catalyzes the transfer of formate to 5-phospho-ribosyl-glycinamide (GAR), producing 5-phospho-ribosyl-N-formylglycinamide (FGAR). Formate is provided by PurU via hydrolysis of 10-formyl-tetrahydrofolate. In Tolumonas auensis (strain DSM 9187 / NBRC 110442 / TA 4), this protein is Formate-dependent phosphoribosylglycinamide formyltransferase.